Reading from the N-terminus, the 217-residue chain is uncharacterized protein (217 aa).

This is an uncharacterized protein from Methanocaldococcus jannaschii (strain ATCC 43067 / DSM 2661 / JAL-1 / JCM 10045 / NBRC 100440) (Methanococcus jannaschii).